The chain runs to 463 residues: Vacuolar cation/proton exchanger 1 (463 aa).

Residue Ala2 is modified to N-acetylalanine. At 2-68 the chain is on the cytoplasmic side; the sequence is AGIVTEPWSV…LKDFLSNLQE (67 aa). The interval 25–33 is required for autoinhibitory regulation; it reads SRELRLGRT. A required for interaction with autoinhibitory region region spans residues 56–62; the sequence is YKGLKDF. A helical membrane pass occupies residues 69-89; the sequence is VILGTKLAILFPAIPAAIICT. The segment at 87-95 is required for Ca(2+)/H(+) exchange activity; that stretch reads ICTYCGVSQ. Topologically, residues 90–96 are extracellular; sequence YCGVSQP. A helical transmembrane segment spans residues 97-116; sequence WIFGLSLLGLTPLAERVSFL. Residues 117–127 lie on the Cytoplasmic side of the membrane; that stretch reads TEQLAFYTGPT. Residues 128 to 148 traverse the membrane as a helical segment; sequence LGGLLNATCGNATELIIAILA. The tract at residues 137-172 is cation selection; sequence GNATELIIAILALTNNKVAVVKYSLLGSILSNLLLV. Residues 149–161 are Extracellular-facing; that stretch reads LTNNKVAVVKYSL. The helical transmembrane segment at 162–182 threads the bilayer; sequence LGSILSNLLLVLGTSLFCGGI. The Cytoplasmic segment spans residues 183 to 197; it reads ANIRREQRFDRKQAD. Residues 198–218 traverse the membrane as a helical segment; the sequence is VNFFLLLLGFLCHLLPLLVGY. Residues 219 to 238 are Extracellular-facing; sequence LKNGEASAAVLSDMQLSISR. Residues 239–259 traverse the membrane as a helical segment; sequence GFSIVMLISYIAYLVFQLWTH. At 260–281 the chain is on the cytoplasmic side; sequence RQLFDAQEQEDEYDDDVEQETA. A helical membrane pass occupies residues 282–302; it reads VISFWSGFAWLVGMTLVIALL. The Extracellular segment spans residues 303–325; that stretch reads SEYVVATIEEASDKWNLSVSFIS. The N-linked (GlcNAc...) asparagine glycan is linked to Asn318. A helical transmembrane segment spans residues 326–346; sequence IILLPIVGNAAEHAGAVIFAF. The segment at 333–368 is cation selection; that stretch reads GNAAEHAGAVIFAFKNKLDISLGVALGSATQIGLFV. Residues 347–360 are Cytoplasmic-facing; that stretch reads KNKLDISLGVALGS. The helical transmembrane segment at 361 to 381 threads the bilayer; the sequence is ATQIGLFVVPLTIIVAWILGI. The Extracellular portion of the chain corresponds to 382-384; sequence NMD. Residues 385-405 form a helical membrane-spanning segment; the sequence is LNFGPLETGCLAVSIIITAFT. Topologically, residues 406 to 411 are cytoplasmic; the sequence is LQDGSS. A helical membrane pass occupies residues 412-432; it reads HYMKGLVLLLCYFIIAICFFV. The Extracellular portion of the chain corresponds to 433 to 463; the sequence is DKLPQKQNAIHLGHQAMNNVVTATGGGVFSS.

This sequence belongs to the Ca(2+):cation antiporter (CaCA) (TC 2.A.19) family. Cation/proton exchanger (CAX) subfamily. In terms of assembly, interacts with GRXS14 and CXIP4. As to expression, expressed at low levels in leaves, stems and flowers.

It localises to the vacuole membrane. Its activity is regulated as follows. Activated by monothiol glutaredoxin GRXS14 and CXIP4. Inhibited by excess of Ca(2+) and Cd(2+), Na(+) and K(+), but not Mn(2+). Vacuolar cation/proton exchanger (CAX). Translocates Ca(2+) and other metal ions into vacuoles using the proton gradient formed by H(+)-ATPase and H(+)-pyrophosphatase. Involved in ion homeostasis in association with CAX3. May play a role in cold-acclimation response. This is Vacuolar cation/proton exchanger 1 (CAX1) from Arabidopsis thaliana (Mouse-ear cress).